A 429-amino-acid polypeptide reads, in one-letter code: Argininosuccinate lyase (429 aa).

This sequence belongs to the lyase 1 family. Argininosuccinate lyase subfamily.

The protein resides in the cytoplasm. It catalyses the reaction 2-(N(omega)-L-arginino)succinate = fumarate + L-arginine. It functions in the pathway amino-acid biosynthesis; L-arginine biosynthesis; L-arginine from L-ornithine and carbamoyl phosphate: step 3/3. The polypeptide is Argininosuccinate lyase (Pyrobaculum islandicum (strain DSM 4184 / JCM 9189 / GEO3)).